The chain runs to 1325 residues: Nephrocystin-3 (1325 aa).

Residues 1 to 20 (MGTASSLVSPTGGEVIEDTY) form a disordered region. Gly2 carries N-myristoyl glycine lipidation. Residues 107-203 (SMGRREAKLD…QRLQAQGIQV (97 aa)) adopt a coiled-coil conformation. TPR repeat units follow at residues 467-500 (TPEEDDFGDVLWDIHDEQEQMEAFQQTSSSAHEL), 881-914 (CLLNLLVAQNLYKRGHFAELLSYWQFVGKDKGAM), 916-937 (TEYFESLKQYENSEGEENMLCL), 938-971 (ADLYETLGRFLKDLGLLSQAVVPLQRSLEIRETA), 980-1013 (AQSLHQLAGVYVQWKKFGDAEQLYKQALEISENA), 1022-1055 (ARELEALATLYHKQNKYEQAEHFRKKSVIIRQQA), 1088-1121 (ARTLNELGVLYFLQNNLETAEQFLKRSLEMRERV), 1130-1163 (AQSLNNLAALCNEKKQYEKAEELYERALDIRRRA), 1172-1205 (AYTVKHLAILYKKTGKVDKAVPLYELAVEIRQKS), 1214-1247 (ATALVNLAVLHSQMKKHSEALPLYERALKIYEDS), and 1256-1289 (GETLKNLAVLSYEEGNFEKAAELYKRAMEIKEAE). Residues 1293–1325 (LGGKAPSRQSSSGDTFLFKTTHSPNVFLPQGQS) form a disordered region. Residues 1299–1325 (SRQSSSGDTFLFKTTHSPNVFLPQGQS) show a composition bias toward polar residues.

As to quaternary structure, interacts with NPHP1 and INVS/NPHP2. Interacts (when myristoylated) with UNC119 and UNC119B; interaction is required for localization to cilium. Interacts with CEP164. Component of a complex containing at least ANKS6, INVS, NEK8 and NPHP3. ANKS6 may organize complex assembly by linking INVS and NPHP3 to NEK8 and INVS may target the complex to the proximal ciliary axoneme.

It is found in the cell projection. The protein resides in the cilium. In terms of biological role, required for normal ciliary development and function. Inhibits disheveled-1-induced canonical Wnt-signaling activity and may also play a role in the control of non-canonical Wnt signaling that regulates planar cell polarity. Probably acts as a molecular switch between different Wnt signaling pathways. Required for proper convergent extension cell movements. The sequence is that of Nephrocystin-3 (Nphp3) from Mus musculus (Mouse).